Here is a 634-residue protein sequence, read N- to C-terminus: uncharacterized protein (634 aa).

Positions 1–40 (MWLQQRLKGLPGLLSSSWARRLLCLLGLLVLLLWFAGSGA) are cleaved as a signal peptide. At 41 to 589 (RRAAGGLQLL…DEHMAQQDPG (549 aa)) the chain is on the extracellular side. Asn363 carries an N-linked (GlcNAc...) asparagine glycan. A helical transmembrane segment spans residues 590–610 (LPFLFWFSVASLITLFHLFLF). Over 611 to 634 (KLIYNEYCGPGAKPFFRNKEDPSV) the chain is Cytoplasmic.

The protein resides in the membrane. This is an uncharacterized protein from Bos taurus (Bovine).